The chain runs to 317 residues: MSQEYLDFELPIAELEAKIESLRAVSEQDGKIDLDDEIKRLQKKSEELTKKTFANLDAWQVSRMARHPNRPYTLDYIEHIFTEFDELAGDRAFADDKAIVGGIARLDGRPVMVIGHQKGRTTKEKVRRNFGMPAPEGYRKALRLMEMADRFNMPIITFIDTPGAYPGIGAEERGQAEAIARNLREMAQLKVPVICTVIGEGGSGGALAIGVGDKVNMLQYSTYSVISPEGCASILWKSAEKASTAAEVMGLTAQRLKELNLIDSIVAEPLGGAHRDVAQMAENLKQQILADLQDLAPLSTEDLLDRRYQRLMSYGYV.

One can recognise a CoA carboxyltransferase C-terminal domain in the interval 40-294; that stretch reads RLQKKSEELT…KQQILADLQD (255 aa).

This sequence belongs to the AccA family. As to quaternary structure, acetyl-CoA carboxylase is a heterohexamer composed of biotin carboxyl carrier protein (AccB), biotin carboxylase (AccC) and two subunits each of ACCase subunit alpha (AccA) and ACCase subunit beta (AccD).

Its subcellular location is the cytoplasm. The catalysed reaction is N(6)-carboxybiotinyl-L-lysyl-[protein] + acetyl-CoA = N(6)-biotinyl-L-lysyl-[protein] + malonyl-CoA. It participates in lipid metabolism; malonyl-CoA biosynthesis; malonyl-CoA from acetyl-CoA: step 1/1. In terms of biological role, component of the acetyl coenzyme A carboxylase (ACC) complex. First, biotin carboxylase catalyzes the carboxylation of biotin on its carrier protein (BCCP) and then the CO(2) group is transferred by the carboxyltransferase to acetyl-CoA to form malonyl-CoA. This chain is Acetyl-coenzyme A carboxylase carboxyl transferase subunit alpha, found in Actinobacillus pleuropneumoniae serotype 5b (strain L20).